Here is a 405-residue protein sequence, read N- to C-terminus: Riboflavin biosynthesis protein RibBA (405 aa).

Residues 1-205 form a DHBP synthase region; the sequence is MSEIQLNTIE…IKDLIAYRLR (205 aa). D-ribulose 5-phosphate is bound by residues 30–31, D35, 144–148, and E168; these read RE and RAGHT. Residue E31 coordinates Mg(2+). H147 is a Mg(2+) binding site. The GTP cyclohydrolase II stretch occupies residues 206–405; the sequence is TESIVENGVE…RMGHVLHNIK (200 aa). 256-260 is a binding site for GTP; sequence RVHSS. Positions 261, 272, and 274 each coordinate Zn(2+). GTP-binding positions include Q277, 299–301, and T321; that span reads EGR. D333 acts as the Proton acceptor; for GTP cyclohydrolase activity in catalysis. The active-site Nucleophile; for GTP cyclohydrolase activity is the R335. The GTP site is built by S356 and K361.

This sequence in the N-terminal section; belongs to the DHBP synthase family. In the C-terminal section; belongs to the GTP cyclohydrolase II family. Requires Mg(2+) as cofactor. Mn(2+) serves as cofactor. It depends on Zn(2+) as a cofactor.

The enzyme catalyses D-ribulose 5-phosphate = (2S)-2-hydroxy-3-oxobutyl phosphate + formate + H(+). It carries out the reaction GTP + 4 H2O = 2,5-diamino-6-hydroxy-4-(5-phosphoribosylamino)-pyrimidine + formate + 2 phosphate + 3 H(+). The protein operates within cofactor biosynthesis; riboflavin biosynthesis; 2-hydroxy-3-oxobutyl phosphate from D-ribulose 5-phosphate: step 1/1. It functions in the pathway cofactor biosynthesis; riboflavin biosynthesis; 5-amino-6-(D-ribitylamino)uracil from GTP: step 1/4. Its function is as follows. Catalyzes the conversion of D-ribulose 5-phosphate to formate and 3,4-dihydroxy-2-butanone 4-phosphate. Catalyzes the conversion of GTP to 2,5-diamino-6-ribosylamino-4(3H)-pyrimidinone 5'-phosphate (DARP), formate and pyrophosphate. The polypeptide is Riboflavin biosynthesis protein RibBA (Parabacteroides distasonis (strain ATCC 8503 / DSM 20701 / CIP 104284 / JCM 5825 / NCTC 11152)).